The chain runs to 73 residues: UPF0352 protein APJL_0577 (73 aa).

The protein belongs to the UPF0352 family.

This chain is UPF0352 protein APJL_0577, found in Actinobacillus pleuropneumoniae serotype 3 (strain JL03).